The following is a 756-amino-acid chain: Amine oxidase [copper-containing] 2 (756 aa).

Topologically, residues 1 to 4 (MHLK) are cytoplasmic. A helical transmembrane segment spans residues 5–25 (IVLAFLALSLITIFALAYVLL). The Extracellular portion of the chain corresponds to 26–756 (TSPGGSSQPP…DLPPFSYHGF (731 aa)). N-linked (GlcNAc...) asparagine glycans are attached at residues asparagine 133, asparagine 198, and asparagine 226. Catalysis depends on aspartate 380, which acts as the Proton acceptor. Cysteine 398 and cysteine 424 are joined by a disulfide. Catalysis depends on tyrosine 465, which acts as the Schiff-base intermediate with substrate; via topaquinone. 2',4',5'-topaquinone is present on tyrosine 465. Cu(2+) is bound by residues histidine 516 and histidine 518. The Ca(2+) site is built by aspartate 525, leucine 526, aspartate 527, glutamate 568, glutamate 637, phenylalanine 659, and asparagine 661. Residue asparagine 662 is glycosylated (N-linked (GlcNAc...) asparagine). Residues glutamate 663, aspartate 669, and leucine 670 each contribute to the Ca(2+) site. Histidine 680 lines the Cu(2+) pocket. A disulfide bond links cysteine 730 and cysteine 737.

It belongs to the copper/topaquinone oxidase family. Homodimer; disulfide-linked. Probably forms heterodimers with AOC3. It depends on Cu(2+) as a cofactor. Ca(2+) serves as cofactor. Requires L-topaquinone as cofactor. Post-translationally, topaquinone (TPQ) is generated by copper-dependent autoxidation of a specific tyrosyl residue. Expressed in many tissues including adipocytes with higher expression in retina where it is active. In terms of tissue distribution, not expressed in testis. As to expression, not expressed in thymus.

The protein localises to the cell membrane. The protein resides in the cytoplasm. The catalysed reaction is 2-phenylethylamine + O2 + H2O = 2-phenylacetaldehyde + H2O2 + NH4(+). It catalyses the reaction tryptamine + O2 + H2O = indole-3-acetaldehyde + H2O2 + NH4(+). The enzyme catalyses tyramine + O2 + H2O = (4-hydroxyphenyl)acetaldehyde + H2O2 + NH4(+). Functionally, catalyzes the oxidative deamination of primary amines to the corresponding aldehydes with the concomitant production of hydrogen peroxide and ammonia. Has a preference for 2-phenylethylamine, tryptamine and tyramine. Could also act on methylamine and benzylamine but much less efficiently. In Homo sapiens (Human), this protein is Amine oxidase [copper-containing] 2.